The primary structure comprises 115 residues: uncharacterized protein (115 aa).

The interval 9–30 (EGLRERGASGKNEQKKKKKEKI) is disordered.

This is an uncharacterized protein from Saccharomyces cerevisiae (strain ATCC 204508 / S288c) (Baker's yeast).